The chain runs to 369 residues: Chorismate synthase (369 aa).

2 residues coordinate NADP(+): Arg48 and Arg54. Residues 125-127 (RSS), 238-239 (NA), Gly278, 293-297 (KPTSS), and Arg319 contribute to the FMN site.

This sequence belongs to the chorismate synthase family. As to quaternary structure, homotetramer. FMNH2 serves as cofactor.

The catalysed reaction is 5-O-(1-carboxyvinyl)-3-phosphoshikimate = chorismate + phosphate. Its pathway is metabolic intermediate biosynthesis; chorismate biosynthesis; chorismate from D-erythrose 4-phosphate and phosphoenolpyruvate: step 7/7. Functionally, catalyzes the anti-1,4-elimination of the C-3 phosphate and the C-6 proR hydrogen from 5-enolpyruvylshikimate-3-phosphate (EPSP) to yield chorismate, which is the branch point compound that serves as the starting substrate for the three terminal pathways of aromatic amino acid biosynthesis. This reaction introduces a second double bond into the aromatic ring system. This chain is Chorismate synthase, found in Cupriavidus necator (strain ATCC 17699 / DSM 428 / KCTC 22496 / NCIMB 10442 / H16 / Stanier 337) (Ralstonia eutropha).